The following is a 482-amino-acid chain: Putative fatty acid desaturase 2-like protein FADS2B (482 aa).

Residues 1-31 (MKFEEKCGDNGSIVGRNQSYPGEKHQPKGKP) are disordered. At 1–167 (MKFEEKCGDN…EAMNMFHANL (167 aa)) the chain is on the cytoplasmic side. The Cytochrome b5 heme-binding domain maps to 56–132 (LSMYTWLEIQ…LKPLLIGELA (77 aa)). Histidine 90 and histidine 113 together coordinate heme. A helical transmembrane segment spans residues 168–188 (GFFFLHFVQILILEVLAWLIV). The Lumenal portion of the chain corresponds to 189 to 190 (YH). A helical membrane pass occupies residues 191–211 (FGSGWPVTMFISFLLTISQAS). Residues 212-305 (SSFLQHDAGH…YEEQHLYFYK (94 aa)) lie on the Cytoplasmic side of the membrane. The Histidine box-1 signature appears at 217-221 (HDAGH). The Histidine box-2 motif lies at 254–258 (HFEQH). The chain crosses the membrane as a helical span at residues 306–326 (VWLPLFMPVYLKLPSMQAMYL). The Lumenal segment spans residues 327 to 343 (QRYWVCFSLQDITWVSS). The chain crosses the membrane as a helical span at residues 344–364 (FYIYFITFGLYYGIFGTMLLI). Over 365 to 482 (YLVKFLESPW…AALWADAYYE (118 aa)) the chain is Cytoplasmic. Residues 421-425 (QIEHH) carry the Histidine box-3 motif.

The protein belongs to the fatty acid desaturase type 1 family.

It localises to the endoplasmic reticulum membrane. It participates in lipid metabolism; polyunsaturated fatty acid biosynthesis. This chain is Putative fatty acid desaturase 2-like protein FADS2B, found in Homo sapiens (Human).